A 303-amino-acid chain; its full sequence is 2-(5''-triphosphoribosyl)-3'-dephosphocoenzyme-A synthase (303 aa).

Belongs to the CitG/MdcB family.

It catalyses the reaction 3'-dephospho-CoA + ATP = 2'-(5''-triphospho-alpha-D-ribosyl)-3'-dephospho-CoA + adenine. Functionally, catalyzes the formation of 2-(5''-triphosphoribosyl)-3'-dephosphocoenzyme-A, the precursor of the prosthetic group of the holo-acyl carrier protein (gamma chain) of citrate lyase, from ATP and dephospho-CoA. The chain is 2-(5''-triphosphoribosyl)-3'-dephosphocoenzyme-A synthase from Escherichia fergusonii (strain ATCC 35469 / DSM 13698 / CCUG 18766 / IAM 14443 / JCM 21226 / LMG 7866 / NBRC 102419 / NCTC 12128 / CDC 0568-73).